Reading from the N-terminus, the 430-residue chain is Sorting nexin-4 (430 aa).

A compositionally biased stretch (polar residues) spans 1–18 (MDSASADASVTGSGNAKG). Positions 1–22 (MDSASADASVTGSGNAKGSSAE) are disordered. In terms of domain architecture, PX spans 33-162 (LEILVSDPQK…IFLVGNEWDT (130 aa)). A 1,2-diacyl-sn-glycero-3-phospho-(1D-myo-inositol-3-phosphate) is bound by residues Arg83, Lys109, and Arg128. Positions 351-414 (ASRRDKINKL…NNLADENIKF (64 aa)) form a coiled coil.

This sequence belongs to the sorting nexin family.

It localises to the cytoplasm. Its subcellular location is the cytosol. The protein resides in the preautophagosomal structure membrane. It is found in the endosome membrane. Sorting nexin, involved in the separation or division of vacuoles throughout the entire life cycle of the cells. Involved in retrieval of late-Golgi SNAREs from post-Golgi endosomes to the trans-Golgi network, for cytoplasm to vacuole transport (Cvt), and autophagy of large cargos including mitophagy, pexophagy and glycophagy. This is Sorting nexin-4 (SNX4) from Candida glabrata (strain ATCC 2001 / BCRC 20586 / JCM 3761 / NBRC 0622 / NRRL Y-65 / CBS 138) (Yeast).